A 302-amino-acid polypeptide reads, in one-letter code: Sulfate adenylyltransferase subunit 2 (302 aa).

The disordered stretch occupies residues 280-302; that stretch reads RQGRLIDSDQSASMEQKKRQGYF.

The protein belongs to the PAPS reductase family. CysD subfamily. In terms of assembly, heterodimer composed of CysD, the smaller subunit, and CysN.

The catalysed reaction is sulfate + ATP + H(+) = adenosine 5'-phosphosulfate + diphosphate. It functions in the pathway sulfur metabolism; hydrogen sulfide biosynthesis; sulfite from sulfate: step 1/3. Its function is as follows. With CysN forms the ATP sulfurylase (ATPS) that catalyzes the adenylation of sulfate producing adenosine 5'-phosphosulfate (APS) and diphosphate, the first enzymatic step in sulfur assimilation pathway. APS synthesis involves the formation of a high-energy phosphoric-sulfuric acid anhydride bond driven by GTP hydrolysis by CysN coupled to ATP hydrolysis by CysD. The protein is Sulfate adenylyltransferase subunit 2 of Shewanella oneidensis (strain ATCC 700550 / JCM 31522 / CIP 106686 / LMG 19005 / NCIMB 14063 / MR-1).